Consider the following 138-residue polypeptide: Large ribosomal subunit protein uL16 (138 aa).

The segment covering 1–13 (MLQPKRRKYRKEQ) has biased composition (basic residues). The segment at 1–24 (MLQPKRRKYRKEQKGRNTGKATRG) is disordered.

This sequence belongs to the universal ribosomal protein uL16 family. In terms of assembly, part of the 50S ribosomal subunit.

In terms of biological role, binds 23S rRNA and is also seen to make contacts with the A and possibly P site tRNAs. This is Large ribosomal subunit protein uL16 from Burkholderia ambifaria (strain ATCC BAA-244 / DSM 16087 / CCUG 44356 / LMG 19182 / AMMD) (Burkholderia cepacia (strain AMMD)).